A 1159-amino-acid polypeptide reads, in one-letter code: MCGPAMFPAGPRWPRVRVLQVLWALLAVLLASRRLWAIKDFEECTWQVVLNEFKRVGENGASDRFFEQELVDTVGNLFHMLVDSPIDPREKYLGFPYYLKINYSCEEKHSEDLVRMGHLTGLKPVVLVTFQSPVNFYRWKIEQLQIQMEAAPFRSKEPCIAEEVCSMSWYTPMPIKNGSVVTRVDVSSNGLGTFIPDKRFQVNINGFLKRNQDNDIQFTVGDELFNLMPQYFVGISSRPLWHTVDQSPVLILGGIPNEKYVLMTDTSFKDFSLVELSIDSCWVGSFYCPQSGFTATIYDTVATESTLFIRQNQLVYYFTGTYTTLYERNRGSGSWVRVLASECIKKLCPVYFHSNGSEYIMALTTGKHEGFVHFGTIRDGQVSFEMLPREWSVCEQIGVTTCSIIWSDYIAGEYTLLLLVESEYENASKRFQVVSYNTANDDLELLYHIPEFIPEARGLEFLMILGTESYTNTVMTPKGISCNPYNHLIFIWGNFLLQSSNKENFIYLADFPKELSIKYMTRSFRGAVAIVTETEEIWYLLEGTYRVYRLFPSKGWKVHISLQLMQQSSLYASNETMLTLFYEGSKLYQLVYLMNNQKGQLVKRLMPVEQLLMYQQHTSHYDLDRKGGYLMLSFTNFCPFSVMRLRNLPGPQRYTRQERYRARPPHVLERSGFHNENSLAIYQGLIYYLLWLHSVYDKPYADPVHDPTWRWWENNKQDQDYYFFLASNWRSAGGVFIEMDSYEKIYNLKSAYELPERIFLDKGTEYSFAIFLSAQSRSFRTMADLGTVFELHSHVDVGVVLADPGCIEASVKQEVLINRNAVLFSITLKDKKVCYDQGISGHHLMKSSMTVNVVGSSGLCFQETHAGARMQGNLMVPVFIGCPPGKRLAFDITYTLEYSRLKNKHYFDCVQVDPEMPCFLFRDIFYPFFLIQDLVTGDSGSFQGSYVLLVVGGGPTLDTLKDYNKDEIYRFNSPLDKTHSLIWTTRTKRTTKDSAFHIMSHESPGIEWLCLENAPCYDNVPQGIFAPEFFFKVLVSNRGVDTSTYCNYQLTFLLHIHGLPLSPKRALFILMVSLSVFVGLVIFYIAFCLLWPLVVKGCTMIRWKINDIIASESYYTYASISGMSSMQSLRRSRMGSMFSSRMTEDKAEPKEAVERQLMT.

The first 35 residues, 1-35 (MCGPAMFPAGPRWPRVRVLQVLWALLAVLLASRRL), serve as a signal peptide directing secretion. The Extracellular portion of the chain corresponds to 36–1065 (WAIKDFEECT…IHGLPLSPKR (1030 aa)). Disulfide bonds link Cys44-Cys105 and Cys159-Cys165. Asn102 carries N-linked (GlcNAc...) asparagine glycosylation. Residue Asn177 is glycosylated (N-linked (GlcNAc...) asparagine). Cys288 and Cys343 are disulfide-bonded. An N-linked (GlcNAc...) asparagine glycan is attached at Asn355. Cys394 and Cys402 are oxidised to a cystine. Asn426 and Asn574 each carry an N-linked (GlcNAc...) asparagine glycan. 5 cysteine pairs are disulfide-bonded: Cys638-Cys860, Cys806-Cys834, Cys882-Cys1046, Cys909-Cys918, and Cys1010-Cys1016. The chain crosses the membrane as a helical span at residues 1066-1087 (ALFILMVSLSVFVGLVIFYIAF). At 1088–1159 (CLLWPLVVKG…KEAVERQLMT (72 aa)) the chain is on the cytoplasmic side. Residues 1138–1159 (FSSRMTEDKAEPKEAVERQLMT) are disordered. A compositionally biased stretch (basic and acidic residues) spans 1142–1159 (MTEDKAEPKEAVERQLMT).

The protein belongs to the CATSPERG family. As to quaternary structure, component of the CatSper complex or CatSpermasome composed of the core pore-forming members CATSPER1, CATSPER2, CATSPER3 and CATSPER4 as well as auxiliary members CATSPERB, CATSPERG, CATSPERD, CATSPERE, CATSPERZ, SCLO6C1, TMEM249, TMEM262 and EFCAB9. HSPA1 may be an additional auxiliary complex member. The core complex members CATSPER1, CATSPER2, CATSPER3 and CATSPER4 form a heterotetrameric channel. The auxiliary CATSPERB, CATSPERG, CATSPERD and CATSPERE subunits form a pavilion-like structure over the pore which stabilizes the complex through interactions with CATSPER4, CATSPER3, CATSPER1 and CATSPER2 respectively. TMEM262/CATSPERH interacts with CATSPERB, further stabilizing the complex. C2CD6/CATSPERT interacts at least with CATSPERD and is required for targeting the CatSper complex in the flagellar membrane.

Its subcellular location is the cell projection. It is found in the cilium. The protein resides in the flagellum membrane. In terms of biological role, auxiliary component of the CatSper complex, a complex involved in sperm cell hyperactivation. Sperm cell hyperactivation is needed for sperm motility which is essential late in the preparation of sperm for fertilization. This chain is Cation channel sperm-associated auxiliary subunit gamma, found in Macaca fascicularis (Crab-eating macaque).